Reading from the N-terminus, the 223-residue chain is Protein phosphatase 1 regulatory subunit 3C (223 aa).

The region spanning 104–209 (REQLTRKLVC…NNDGKNYSLH (106 aa)) is the CBM21 domain.

As to quaternary structure, interacts with PPP1CC catalytic subunit of PP1 and associates with glycogen. Forms complexes with glycogen phosphorylase, glycogen synthase and phosphorylase kinase which is necessary for its regulation of PP1 activity.

Its function is as follows. Acts as a glycogen-targeting subunit for PP1 and regulates its activity. Activates glycogen synthase, reduces glycogen phosphorylase activity and limits glycogen breakdown. This chain is Protein phosphatase 1 regulatory subunit 3C, found in Xenopus tropicalis (Western clawed frog).